Consider the following 866-residue polypeptide: Interleukin-17 receptor A (866 aa).

A signal peptide spans 1–32; that stretch reads MGAARSPPSAVPGPLLGLLLLLLGVLAPGGAS. Over 33 to 320 the chain is Extracellular; it reads LRLLDHRALV…EPIPDYMPLW (288 aa). A disulfide bridge connects residues C43 and C50. 3 N-linked (GlcNAc...) asparagine glycosylation sites follow: N49, N54, and N67. 2 cysteine pairs are disulfide-bonded: C57–C126 and C185–C196. N-linked (GlcNAc...) asparagine glycans are attached at residues N206, N225, N242, and N265. Disulfide bonds link C245–C276, C277–C303, and C290–C294. Residues 321-341 form a helical membrane-spanning segment; sequence VYWFITGISILLVGSVILLIV. Over 342–866 the chain is Cytoplasmic; the sequence is CMTWRLAGPG…MGSESEGPSA (525 aa). The region spanning 377 to 534 is the SEFIR domain; that stretch reads PRKVWIIYSA…LMDRFEEVYF (158 aa). A phosphoserine mark is found at S708 and S736. Disordered regions lie at residues 717–736 and 773–840; these read LFLP…PMAS and MVLT…RSLQ. Over residues 788 to 801 the composition is skewed to polar residues; sequence QSVQSDQGYISRSS. Over residues 809–819 the composition is skewed to acidic residues; that stretch reads TEMEEEEEEEQ.

Forms heterodimers with IL17RC; the heterodimer binds IL17A and IL17F homodimers as well as the heterodimer formed by IL17A and IL17F. Forms complexes with 2:1 binding stoichiometry: two receptor chains for one interleukin molecule. IL17A homodimer preferentially drives the formation of IL17RA-IL17RC heterodimeric receptor complex, whereas IL17F homodimer forms predominantly complexes with IL17RC homodimer. IL17A homodimer adopts an asymmetrical ternary structure with one IL17RA molecule, allowing for high affinity interactions of one IL17A monomer with one IL17RA molecule (via D1 and D2 domains), while disfavoring binding of a second IL17RA molecule on the other IL17A monomer. IL17A-IL17F forms complexes with IL17RA-IL17RC, but with lower affinity when compared to IL17A homodimer. IL17RA chain cannot distinguish between IL17A and IL17F molecules, potentially enabling the formation of topologically distinct complexes. Interacts with TRAF3IP2. Forms heterodimers with IL17RE; the heterodimer binds IL17C. As to quaternary structure, (Microbial infection) Interacts with SARS coronavirus-2/SARS-CoV-2 virus protein ORF8. In terms of processing, glycosylated. Widely expressed.

It is found in the cell membrane. The protein localises to the secreted. Functionally, receptor for IL17A and IL17F, major effector cytokines of innate and adaptive immune system involved in antimicrobial host defense and maintenance of tissue integrity. Receptor for IL17A. Receptor for IL17F. Binds to IL17A with higher affinity than to IL17F. Binds IL17A and IL17F homodimers as part of a heterodimeric complex with IL17RC. Also binds heterodimers formed by IL17A and IL17F as part of a heterodimeric complex with IL17RC. Cytokine binding triggers homotypic interaction of IL17RA and IL17RC chains with TRAF3IP2 adapter, leading to TRAF6-mediated activation of NF-kappa-B and MAPkinase pathways, ultimately resulting in transcriptional activation of cytokines, chemokines, antimicrobial peptides and matrix metalloproteinases, with potential strong immune inflammation. Involved in antimicrobial host defense primarily promoting neutrophil activation and recruitment at infection sites to destroy extracellular bacteria and fungi. In secondary lymphoid organs, contributes to germinal center formation by regulating the chemotactic response of B cells to CXCL12 and CXCL13, enhancing retention of B cells within the germinal centers, B cell somatic hypermutation rate and selection toward plasma cells. Plays a role in the maintenance of the integrity of epithelial barriers during homeostasis and pathogen infection. Stimulates the production of antimicrobial beta-defensins DEFB1, DEFB103A, and DEFB104A by mucosal epithelial cells, limiting the entry of microbes through the epithelial barriers. Involved in antiviral host defense through various mechanisms. Enhances immunity against West Nile virus by promoting T cell cytotoxicity. Contributes to Influenza virus clearance by driving the differentiation of B-1a B cells, providing for production of virus-specific IgM antibodies at first line of host defense. Receptor for IL17C as part of a heterodimeric complex with IL17RE. In terms of biological role, (Microbial infection) Receptor for SARS coronavirus-2/SARS-CoV-2 virus protein ORF8, leading to IL17 pathway activation and an increased secretion of pro-inflammatory factors through activating NF-kappa-B signaling pathway. The sequence is that of Interleukin-17 receptor A from Homo sapiens (Human).